We begin with the raw amino-acid sequence, 507 residues long: MAGQPLACQLQEEVTCPICMEILQDPVTIDCGHNFCLQCISQVGKTSEKIQCPLCKLSVNKNTFRPNKLLASLAEKIQSMDPADIQAEKEDSRCQRHKEKLHYFCEQDGAFLCVVCRDSKDHKSHNVTLIDEAAQNYKVQIESQAQDLGQKDKKIIEEKKQGEGAIWAFRAQVDLEKLKIHEEFKLLRQRLDEEESFLLSRLDWLEQQGAKQLRQYVTVTEKQLNSLRKLTKSLKIRLQSSSMELLKDIKDALSRGKEFQFLNPNPVPEDLEKKCSEAKARHESIIKTLTELKDDMNAEGKRDKSAFMNSLNKEEKESWSLLQKNNSVLPTSVPVTLDKSSADPDLTFSQDLKKVTLYIVAGKASNRQAKPRPFYPFHCVRGSPGLSSGRQVWEAEIRGPSGGACIVGVVTELARGAQSQTVSAQSYIWALRISPSGCQPFTNCKAQEYLQVCLKKVGVYVNHDCGEVVFYDAITSKHIYTFQTSFDGKVFPLFGLQVACSHITLSP.

The RING-type zinc finger occupies 16–56 (CPICMEILQDPVTIDCGHNFCLQCISQVGKTSEKIQCPLCK). Residues 89–130 (KEDSRCQRHKEKLHYFCEQDGAFLCVVCRDSKDHKSHNVTLI) form a B box-type zinc finger. Residues C94, H97, C116, and H122 each contribute to the Zn(2+) site. Coiled coils occupy residues 176–241 (EKLK…LQSS) and 269–298 (EDLE…DMNA). A B30.2/SPRY domain is found at 315 to 507 (EKESWSLLQK…VACSHITLSP (193 aa)).

The protein belongs to the TRIM/RBCC family. As to quaternary structure, may form oligomers. Interacts with isoform p52shc of SHC1. In terms of processing, auto-ubiquitinated (in vitro). In terms of tissue distribution, highly expressed in the gastrointestrinal tract, with high expression in the small intestine, moderate in the large intestine and weak in the stomach and esophagus.

The protein resides in the cytoplasm. It localises to the mitochondrion. It catalyses the reaction S-ubiquitinyl-[E2 ubiquitin-conjugating enzyme]-L-cysteine + [acceptor protein]-L-lysine = [E2 ubiquitin-conjugating enzyme]-L-cysteine + N(6)-ubiquitinyl-[acceptor protein]-L-lysine.. The protein operates within protein modification; protein ubiquitination. Functionally, E3 ubiquitin-protein ligase that acts as a regulator of antiviral immune response and inflammation by mediating ubiquitination of substrates. Acts as a regulator of innate immune defense against viruses by mediating 'Lys-63'-linked ubiquitination of MAVS, promoting MAVS polymerization and formation of three-stranded helical filaments on mitochondria. Acts as a negative regulator of the NLRP3 inflammasome by catalyzing 'Lys-48'-linked ubiquitination of NLRP3, leading to its degradation. Regulator of Src-induced anchorage independent cell growth. The sequence is that of E3 ubiquitin-protein ligase TRIM31 from Mus musculus (Mouse).